Here is a 221-residue protein sequence, read N- to C-terminus: Oxaloacetate tautomerase FAHD1, mitochondrial (221 aa).

The transit peptide at 1 to 24 (MAASRPLSRFWEWGKNIVCVGRNY) directs the protein to the mitochondrion. The residue at position 37 (Ser37) is a Phosphoserine. The Mg(2+) site is built by Glu68, Glu70, and Asp99. The residue at position 110 (Lys110) is an N6-acetyllysine. Lys112 bears the N6-succinyllysine mark.

Belongs to the FAH family. In terms of assembly, homodimer. The cofactor is Mg(2+). Mn(2+) serves as cofactor.

The protein localises to the mitochondrion. The protein resides in the cytoplasm. It is found in the cytosol. It carries out the reaction oxaloacetate = enol-oxaloacetate. The catalysed reaction is oxaloacetate + H(+) = pyruvate + CO2. It catalyses the reaction a 3-acylpyruvate + H2O = a carboxylate + pyruvate + H(+). The enzyme catalyses acetylpyruvate + H2O = acetate + pyruvate + H(+). It carries out the reaction 3-fumarylpyruvate + H2O = fumarate + pyruvate + H(+). Its activity is regulated as follows. Oxaloacetate decarboxylation is competitively inhibited by oxalate. Tautomerase that converts enol-oxaloacetate, a strong inhibitor of succinate dehydrogenase, to the physiological keto form of oxaloacetate. It is thereby required to maximize aerobic respiration efficiency by preventing succinate dehydrogenase inhibition. Also acts as a weak oxaloacetate decarboxylase (ODx), catalyzing the decarboxylation of oxaloacetate (OAA) to pyruvate and CO(2), and as such is likely a regulatory enzyme in the TCA cycle. Also displays acylpyruvase activity, being able to hydrolyze acetylpyruvate and fumarylpyruvate in vitro. This chain is Oxaloacetate tautomerase FAHD1, mitochondrial, found in Bos taurus (Bovine).